We begin with the raw amino-acid sequence, 228 residues long: GDT1-like protein 5 (228 aa).

Residue glycine 2 is modified to N-acetylglycine. The next 6 helical transmembrane spans lie at 12–32 (LAMT…AILA), 39–59 (LVLA…ATLG), 71–91 (THHI…WDGF), 133–153 (PFLT…NFFG), 173–193 (LGVV…AVLG), and 205–225 (IVAL…LLTP).

The protein belongs to the GDT1 family.

It is found in the membrane. The chain is GDT1-like protein 5 from Arabidopsis thaliana (Mouse-ear cress).